Here is a 157-residue protein sequence, read N- to C-terminus: Transcription elongation factor GreA (157 aa).

A coiled-coil region spans residues 47-75; it reads SGEYEDAKKAQALLEGRIRELKHLLSRAE.

The protein belongs to the GreA/GreB family.

Functionally, necessary for efficient RNA polymerase transcription elongation past template-encoded arresting sites. The arresting sites in DNA have the property of trapping a certain fraction of elongating RNA polymerases that pass through, resulting in locked ternary complexes. Cleavage of the nascent transcript by cleavage factors such as GreA or GreB allows the resumption of elongation from the new 3'terminus. GreA releases sequences of 2 to 3 nucleotides. This chain is Transcription elongation factor GreA, found in Chloroflexus aurantiacus (strain ATCC 29366 / DSM 635 / J-10-fl).